We begin with the raw amino-acid sequence, 1222 residues long: PAN2-PAN3 deadenylation complex catalytic subunit PAN2 (1222 aa).

WD repeat units lie at residues 104-143 (PEMTELRCMSFTAQPHKIIVAGLQSAMFIIDVEKGAIVDQ) and 276-315 (ANVAFMLGLEVSPSGEALAINDAECSIHLWGSPSKIHFNE). The interval 316 to 451 (IGKETEFSDI…GLKINGETKE (136 aa)) is linker. A USP domain is found at 452-821 (DPLLKYSNVE…SPCTLAYQIS (370 aa)). One can recognise an Exonuclease domain in the interval 871 to 1027 (ALDTEFVDLE…WAVFKEYIQE (157 aa)). The a divalent metal cation site is built by Asp873, Glu875, and Asp982. Positions 1035-1067 (TSITTTTNPNIHDANTSTTTTTAITTTPPEGHD) are disordered. Positions 1050–1061 (TSTTTTTAITTT) are enriched in low complexity. Asp1071 provides a ligand contact to a divalent metal cation. 2 disordered regions span residues 1110-1152 (PARY…LSGR) and 1167-1222 (ASVT…SPMR). Low complexity predominate over residues 1119 to 1133 (PNPNNNNINNGVNPN). Over residues 1134-1144 (GLSTPGSTNPI) the composition is skewed to polar residues. Over residues 1180 to 1191 (NGSMSGSTPSTP) the composition is skewed to low complexity. The span at 1207 to 1216 (SFGGAKGLTF) shows a compositional bias: gly residues.

It belongs to the peptidase C19 family. PAN2 subfamily. Forms a heterotrimer with an asymmetric homodimer of the regulatory subunit PAN3 to form the poly(A)-nuclease (PAN) deadenylation complex. A divalent metal cation serves as cofactor.

The protein resides in the cytoplasm. The enzyme catalyses Exonucleolytic cleavage of poly(A) to 5'-AMP.. Its activity is regulated as follows. Positively regulated by the regulatory subunit PAN3. Functionally, catalytic subunit of the poly(A)-nuclease (PAN) deadenylation complex, one of two cytoplasmic mRNA deadenylases involved in mRNA turnover. PAN specifically shortens poly(A) tails of RNA and the activity is stimulated by poly(A)-binding protein PAB1. PAN deadenylation is followed by rapid degradation of the shortened mRNA tails by the CCR4-NOT complex. Deadenylated mRNAs are then degraded by two alternative mechanisms, namely exosome-mediated 3'-5' exonucleolytic degradation, or deadenylation-dependent mRNA decaping and subsequent 5'-3' exonucleolytic degradation by XRN1. May also be involved in post-transcriptional maturation of mRNA poly(A) tails. The protein is PAN2-PAN3 deadenylation complex catalytic subunit PAN2 of Coccidioides immitis (strain RS) (Valley fever fungus).